The chain runs to 228 residues: Immunogenic protein MPB64 (228 aa).

The first 23 residues, 1 to 23 (MRIKIFMLVTAVVLLCCSGVATA), serve as a signal peptide directing secretion.

Belongs to the RsiV family.

It is found in the secreted. In Mycobacterium bovis (strain ATCC BAA-935 / AF2122/97), this protein is Immunogenic protein MPB64 (mpb64).